The sequence spans 266 residues: Cytochrome c oxidase subunit 2 (266 aa).

Residues 1 to 43 (MTITNYINNQFTFLDMAEPWQLGFQDPATPVMEGIINFHHDLM) lie on the Mitochondrial intermembrane side of the membrane. Residues 44-64 (FFLISIVVFVCWMLFRVITLF) traverse the membrane as a helical segment. Over 65–82 (DEKKNKIPATVVHGATIE) the chain is Mitochondrial matrix. The helical transmembrane segment at 83–103 (IIWTSIPALILLTVAVPSFAL) threads the bilayer. Residues 104–266 (LYSMDEVIDP…NVXLIKFYGI (163 aa)) lie on the Mitochondrial intermembrane side of the membrane. Positions 186, 221, 223, 225, 229, and 232 each coordinate Cu cation. Glutamate 223 serves as a coordination point for Mg(2+).

The protein belongs to the cytochrome c oxidase subunit 2 family. In terms of assembly, component of the cytochrome c oxidase (complex IV, CIV), a multisubunit enzyme composed of a catalytic core of 3 subunits and several supernumerary subunits. The complex exists as a monomer or a dimer and forms supercomplexes (SCs) in the inner mitochondrial membrane with ubiquinol-cytochrome c oxidoreductase (cytochrome b-c1 complex, complex III, CIII). Cu cation serves as cofactor.

The protein resides in the mitochondrion inner membrane. It carries out the reaction 4 Fe(II)-[cytochrome c] + O2 + 8 H(+)(in) = 4 Fe(III)-[cytochrome c] + 2 H2O + 4 H(+)(out). In terms of biological role, component of the cytochrome c oxidase, the last enzyme in the mitochondrial electron transport chain which drives oxidative phosphorylation. The respiratory chain contains 3 multisubunit complexes succinate dehydrogenase (complex II, CII), ubiquinol-cytochrome c oxidoreductase (cytochrome b-c1 complex, complex III, CIII) and cytochrome c oxidase (complex IV, CIV), that cooperate to transfer electrons derived from NADH and succinate to molecular oxygen, creating an electrochemical gradient over the inner membrane that drives transmembrane transport and the ATP synthase. Cytochrome c oxidase is the component of the respiratory chain that catalyzes the reduction of oxygen to water. Electrons originating from reduced cytochrome c in the intermembrane space (IMS) are transferred via the dinuclear copper A center (CU(A)) of subunit 2 and heme A of subunit 1 to the active site in subunit 1, a binuclear center (BNC) formed by heme A3 and copper B (CU(B)). The BNC reduces molecular oxygen to 2 water molecules using 4 electrons from cytochrome c in the IMS and 4 protons from the mitochondrial matrix. In Phytophthora megasperma (Potato pink rot fungus), this protein is Cytochrome c oxidase subunit 2 (COX2).